Here is a 459-residue protein sequence, read N- to C-terminus: tRNA modification GTPase MnmE (459 aa).

(6S)-5-formyl-5,6,7,8-tetrahydrofolate-binding residues include R23, E88, and R127. The TrmE-type G domain occupies 223 to 381 (GLSVVIVGKP…IKNCIKELFF (159 aa)). N233 is a K(+) binding site. Residues 233–238 (NVGKSS), 252–258 (TDIPGTT), and 277–280 (DTAG) each bind GTP. S237 contacts Mg(2+). 3 residues coordinate K(+): T252, I254, and T257. T258 lines the Mg(2+) pocket. K459 serves as a coordination point for (6S)-5-formyl-5,6,7,8-tetrahydrofolate.

It belongs to the TRAFAC class TrmE-Era-EngA-EngB-Septin-like GTPase superfamily. TrmE GTPase family. As to quaternary structure, homodimer. Heterotetramer of two MnmE and two MnmG subunits. It depends on K(+) as a cofactor.

It is found in the cytoplasm. Its function is as follows. Exhibits a very high intrinsic GTPase hydrolysis rate. Involved in the addition of a carboxymethylaminomethyl (cmnm) group at the wobble position (U34) of certain tRNAs, forming tRNA-cmnm(5)s(2)U34. This Clostridium kluyveri (strain ATCC 8527 / DSM 555 / NBRC 12016 / NCIMB 10680 / K1) protein is tRNA modification GTPase MnmE.